Consider the following 340-residue polypeptide: S-adenosylmethionine:tRNA ribosyltransferase-isomerase (340 aa).

It belongs to the QueA family. Monomer.

It localises to the cytoplasm. It carries out the reaction 7-aminomethyl-7-carbaguanosine(34) in tRNA + S-adenosyl-L-methionine = epoxyqueuosine(34) in tRNA + adenine + L-methionine + 2 H(+). The protein operates within tRNA modification; tRNA-queuosine biosynthesis. In terms of biological role, transfers and isomerizes the ribose moiety from AdoMet to the 7-aminomethyl group of 7-deazaguanine (preQ1-tRNA) to give epoxyqueuosine (oQ-tRNA). The chain is S-adenosylmethionine:tRNA ribosyltransferase-isomerase from Francisella tularensis subsp. tularensis (strain FSC 198).